A 97-amino-acid polypeptide reads, in one-letter code: Aspartyl/glutamyl-tRNA(Asn/Gln) amidotransferase subunit C (97 aa).

The protein belongs to the GatC family. Heterotrimer of A, B and C subunits.

The enzyme catalyses L-glutamyl-tRNA(Gln) + L-glutamine + ATP + H2O = L-glutaminyl-tRNA(Gln) + L-glutamate + ADP + phosphate + H(+). The catalysed reaction is L-aspartyl-tRNA(Asn) + L-glutamine + ATP + H2O = L-asparaginyl-tRNA(Asn) + L-glutamate + ADP + phosphate + 2 H(+). Functionally, allows the formation of correctly charged Asn-tRNA(Asn) or Gln-tRNA(Gln) through the transamidation of misacylated Asp-tRNA(Asn) or Glu-tRNA(Gln) in organisms which lack either or both of asparaginyl-tRNA or glutaminyl-tRNA synthetases. The reaction takes place in the presence of glutamine and ATP through an activated phospho-Asp-tRNA(Asn) or phospho-Glu-tRNA(Gln). This is Aspartyl/glutamyl-tRNA(Asn/Gln) amidotransferase subunit C from Prochlorococcus marinus (strain MIT 9515).